A 313-amino-acid chain; its full sequence is Olfactory receptor 1G1 (313 aa).

Residues 1–25 (MEGKNLTSISEFFLLGFSEQLEEQK) lie on the Extracellular side of the membrane. The N-linked (GlcNAc...) asparagine glycan is linked to Asn-5. A helical membrane pass occupies residues 26 to 49 (ALFGSFLFMYLVTVAGNLLIILVI). The Cytoplasmic segment spans residues 50–57 (ITDTQLHT). The chain crosses the membrane as a helical span at residues 58-79 (PMYFFLANLSLADACFVSTTVP). The Extracellular segment spans residues 80 to 100 (KMLANIQIQSQAISYSGCLLQ). Cys-97 and Cys-189 are oxidised to a cystine. A helical membrane pass occupies residues 101-120 (LYFFMLFVMLEAFLLAVMAY). At 121–140 (DRYVAICHPLHYILIMSPGL) the chain is on the cytoplasmic side. Residues 141–158 (CVFLVSASWIMNALHSLL) form a helical membrane-spanning segment. At 159-196 (HTLLMNSLSFCANHEIPHFFCDIDPLLSLSCTDPFTNE) the chain is on the extracellular side. Residues 197 to 219 (LVIFITGGLTGLVCVLCLIISYT) traverse the membrane as a helical segment. The Cytoplasmic segment spans residues 220 to 236 (NIFSTILKIPSAQGKRK). The helical transmembrane segment at 237–259 (AFSTCGSHLSVVSLFFGTSFCVY) threads the bilayer. At 260 to 272 (FIPPSTRSAQKDT) the chain is on the extracellular side. A helical transmembrane segment spans residues 273 to 292 (VASVMYTVVTPMLNPFIYSL). Residues 293 to 313 (RNQEIKSSLRKLIWVREIHSP) are Cytoplasmic-facing.

It belongs to the G-protein coupled receptor 1 family.

Its subcellular location is the cell membrane. Odorant receptor. This Gorilla gorilla gorilla (Western lowland gorilla) protein is Olfactory receptor 1G1 (OR1G1).